Here is a 359-residue protein sequence, read N- to C-terminus: 4-hydroxy-tetrahydrodipicolinate synthase, chloroplastic (359 aa).

A chloroplast-targeting transit peptide spans 1-33 (MSSSIIGRCHFVADSIEAAGTKRRTTRWRSPRA). Threonine 102 is a pyruvate binding site. Tyrosine 188 acts as the Proton donor/acceptor in catalysis. Lysine 216 (schiff-base intermediate with substrate) is an active-site residue. Residue isoleucine 255 participates in pyruvate binding.

The protein belongs to the DapA family.

The protein localises to the plastid. Its subcellular location is the chloroplast. The enzyme catalyses L-aspartate 4-semialdehyde + pyruvate = (2S,4S)-4-hydroxy-2,3,4,5-tetrahydrodipicolinate + H2O + H(+). It participates in amino-acid biosynthesis; L-lysine biosynthesis via DAP pathway; (S)-tetrahydrodipicolinate from L-aspartate: step 3/4. Functionally, catalyzes the condensation of (S)-aspartate-beta-semialdehyde [(S)-ASA] and pyruvate to 4-hydroxy-tetrahydrodipicolinate (HTPA). In Nicotiana tabacum (Common tobacco), this protein is 4-hydroxy-tetrahydrodipicolinate synthase, chloroplastic (DHPS1).